A 364-amino-acid polypeptide reads, in one-letter code: MAHQFPALTSEQKKALSETARRIVANGKGILAADESVGTMGNRLQRIKVENTEENRRQFRELLFTVDSSVSQSIGGVILFHETLYQKDGQGKLFRDILKEKGIVVGIKLDQGVAPLAGTNKETTVQGLDGLSERCAQYKKDGADFGKWRAVLKIDNQCPSHLAIQENANTLARYASIYQQNGLVPIVEPEVIPDGSHDMEHCQYVTEKVLAAVYKALNDHHVYLEGTLLKPNMVTAGHACTKKYTPEQVAMATVTALHRTVPAAVPGICFLSGGMSEEDATLNLNAINLCPLPKPWKLSFSYGRALQASALAAWGGKAENKKATQEAFMKRALANSQAAKGQYVHMGSSDSASTQSLFTASYTY.

An N-acetylalanine modification is found at alanine 2. Lysine 13 carries the N6-succinyllysine modification. Serine 36 carries the post-translational modification Phosphoserine. Threonine 39 carries the phosphothreonine modification. Beta-D-fructose 1,6-bisphosphate is bound at residue arginine 43. Threonine 119 is subject to Phosphothreonine. Residue lysine 121 is modified to N6-succinyllysine. A Phosphoserine modification is found at serine 132. The Proton acceptor role is filled by glutamate 188. Catalysis depends on lysine 230, which acts as the Schiff-base intermediate with dihydroxyacetone-P. Phosphoserine is present on residues serine 272, serine 276, serine 299, and serine 301. Residue 272 to 274 (SGG) coordinates beta-D-fructose 1,6-bisphosphate. Arginine 304 is a beta-D-fructose 1,6-bisphosphate binding site. Serine 309 bears the Phosphoserine mark. The residue at position 317 (lysine 317) is an N6-succinyllysine.

It belongs to the class I fructose-bisphosphate aldolase family. As to quaternary structure, homotetramer. Interacts with BBS1, BBS2, BBS4 and BBS7. Forms a ternary complex with G6PD and TP53; this interaction is direct.

It is found in the cytoplasm. The protein resides in the cytosol. It localises to the cytoskeleton. Its subcellular location is the microtubule organizing center. The protein localises to the centrosome. It is found in the centriolar satellite. The catalysed reaction is beta-D-fructose 1,6-bisphosphate = D-glyceraldehyde 3-phosphate + dihydroxyacetone phosphate. It catalyses the reaction beta-D-fructose 1-phosphate = D-glyceraldehyde + dihydroxyacetone phosphate. It participates in carbohydrate degradation; glycolysis; D-glyceraldehyde 3-phosphate and glycerone phosphate from D-glucose: step 4/4. The protein operates within carbohydrate biosynthesis; gluconeogenesis. It functions in the pathway carbohydrate metabolism; fructose metabolism. Catalyzes the aldol cleavage of fructose 1,6-biphosphate to form two triosephosphates dihydroxyacetone phosphate and D-glyceraldehyde 3-phosphate in glycolysis as well as the reverse stereospecific aldol addition reaction in gluconeogenesis. In fructolysis, metabolizes fructose 1-phosphate derived from the phosphorylation of dietary fructose by fructokinase into dihydroxyacetone phosphate and D-glyceraldehyde. Acts as an adapter independently of its enzymatic activity, exerts a tumor suppressor role by stabilizing the ternary complex with G6PD and TP53 to inhibit G6PD activity and keep oxidative pentose phosphate metabolism in check. In Ovis aries (Sheep), this protein is Fructose-bisphosphate aldolase B (ALDOB).